A 104-amino-acid polypeptide reads, in one-letter code: Large ribosomal subunit protein uL24 (104 aa).

It belongs to the universal ribosomal protein uL24 family. In terms of assembly, part of the 50S ribosomal subunit.

In terms of biological role, one of two assembly initiator proteins, it binds directly to the 5'-end of the 23S rRNA, where it nucleates assembly of the 50S subunit. Functionally, one of the proteins that surrounds the polypeptide exit tunnel on the outside of the subunit. The protein is Large ribosomal subunit protein uL24 of Flavobacterium johnsoniae (strain ATCC 17061 / DSM 2064 / JCM 8514 / BCRC 14874 / CCUG 350202 / NBRC 14942 / NCIMB 11054 / UW101) (Cytophaga johnsonae).